The sequence spans 180 residues: NADH-quinone oxidoreductase subunit I (180 aa).

4Fe-4S ferredoxin-type domains follow at residues 50-80 and 90-119; these read LTRD…LQKA and EFFR…MTPD. [4Fe-4S] cluster contacts are provided by C60, C63, C66, C70, C99, C102, C105, and C109.

It belongs to the complex I 23 kDa subunit family. In terms of assembly, NDH-1 is composed of 14 different subunits. Subunits NuoA, H, J, K, L, M, N constitute the membrane sector of the complex. [4Fe-4S] cluster serves as cofactor.

Its subcellular location is the cell inner membrane. The enzyme catalyses a quinone + NADH + 5 H(+)(in) = a quinol + NAD(+) + 4 H(+)(out). Functionally, NDH-1 shuttles electrons from NADH, via FMN and iron-sulfur (Fe-S) centers, to quinones in the respiratory chain. The immediate electron acceptor for the enzyme in this species is believed to be ubiquinone. Couples the redox reaction to proton translocation (for every two electrons transferred, four hydrogen ions are translocated across the cytoplasmic membrane), and thus conserves the redox energy in a proton gradient. This is NADH-quinone oxidoreductase subunit I from Acinetobacter baylyi (strain ATCC 33305 / BD413 / ADP1).